Here is a 1567-residue protein sequence, read N- to C-terminus: ABC multidrug transporter MDR1 (1567 aa).

Pro residues predominate over residues Met-1–Gly-11. The disordered stretch occupies residues Met-1–Asp-37. Residues Ser-22–Pro-32 are compositionally biased toward polar residues. Asn-149, Asn-157, and Asn-356 each carry an N-linked (GlcNAc...) asparagine glycan. Positions Val-167–Pro-432 constitute an ABC transporter 1 domain. 6 consecutive transmembrane segments (helical) span residues Ser-543–Phe-563, Gly-571–Ile-591, Ile-636–Leu-656, Ala-661–Phe-681, Ile-691–Phe-711, and Leu-798–Leu-818. N-linked (GlcNAc...) asparagine glycosylation is found at Asn-819, Asn-895, and Asn-912. An ABC transporter 2 domain is found at Phe-891–Ala-1134. Gly-927 to Thr-934 serves as a coordination point for ATP. Residues Glu-1172 to Pro-1202 form a disordered region. Residues Ile-1231 to Leu-1251 traverse the membrane as a helical segment. N-linked (GlcNAc...) asparagine glycosylation is present at Asn-1253. Helical transmembrane passes span Ala-1257–Val-1277, Val-1305–Ala-1325, Ile-1345–Ile-1365, Glu-1372–Leu-1392, and Gly-1498–Ile-1518.

This sequence belongs to the ABC transporter superfamily. ABCG family. PDR (TC 3.A.1.205) subfamily.

The protein resides in the cell membrane. The enzyme catalyses voriconazole(in) + ATP + H2O = voriconazole(out) + ADP + phosphate + H(+). The catalysed reaction is fluconazole(in) + ATP + H2O = fluconazole(out) + ADP + phosphate + H(+). It catalyses the reaction (R)-miconazole(in) + ATP + H2O = (R)-miconazole(out) + ADP + phosphate + H(+). It carries out the reaction (S)-miconazole(in) + ATP + H2O = (S)-miconazole(out) + ADP + phosphate + H(+). Pleiotropic ABC efflux transporter that may be involved in the modulation susceptibility to a wide range of unrelated cytotoxic compounds. This is ABC multidrug transporter MDR1 from Trichophyton equinum (strain ATCC MYA-4606 / CBS 127.97) (Horse ringworm fungus).